A 455-amino-acid chain; its full sequence is Bifunctional protein GlmU (455 aa).

Positions 1–230 (MVNKNAIILA…FDESMGVNDR (230 aa)) are pyrophosphorylase. Residues 9–12 (LAAG), Lys-23, Gln-73, 78–79 (GT), 101–103 (SGD), Gly-140, Glu-155, Asn-170, and Asn-228 each bind UDP-N-acetyl-alpha-D-glucosamine. Position 103 (Asp-103) interacts with Mg(2+). Asn-228 contacts Mg(2+). Residues 231–251 (SALAKATKIMQKRINTQLMKD) are linker. Residues 252 to 455 (GVTLVDPETA…KPGYAKKLPW (204 aa)) are N-acetyltransferase. UDP-N-acetyl-alpha-D-glucosamine is bound by residues Arg-333 and Lys-351. Residue His-363 is the Proton acceptor of the active site. UDP-N-acetyl-alpha-D-glucosamine contacts are provided by Tyr-366 and Asn-377. Acetyl-CoA contacts are provided by residues 386–387 (NY), Ser-405, Ala-423, and Arg-440.

It in the N-terminal section; belongs to the N-acetylglucosamine-1-phosphate uridyltransferase family. This sequence in the C-terminal section; belongs to the transferase hexapeptide repeat family. As to quaternary structure, homotrimer. Requires Mg(2+) as cofactor.

It is found in the cytoplasm. The catalysed reaction is alpha-D-glucosamine 1-phosphate + acetyl-CoA = N-acetyl-alpha-D-glucosamine 1-phosphate + CoA + H(+). It catalyses the reaction N-acetyl-alpha-D-glucosamine 1-phosphate + UTP + H(+) = UDP-N-acetyl-alpha-D-glucosamine + diphosphate. Its pathway is nucleotide-sugar biosynthesis; UDP-N-acetyl-alpha-D-glucosamine biosynthesis; N-acetyl-alpha-D-glucosamine 1-phosphate from alpha-D-glucosamine 6-phosphate (route II): step 2/2. It functions in the pathway nucleotide-sugar biosynthesis; UDP-N-acetyl-alpha-D-glucosamine biosynthesis; UDP-N-acetyl-alpha-D-glucosamine from N-acetyl-alpha-D-glucosamine 1-phosphate: step 1/1. The protein operates within bacterial outer membrane biogenesis; LPS lipid A biosynthesis. In terms of biological role, catalyzes the last two sequential reactions in the de novo biosynthetic pathway for UDP-N-acetylglucosamine (UDP-GlcNAc). The C-terminal domain catalyzes the transfer of acetyl group from acetyl coenzyme A to glucosamine-1-phosphate (GlcN-1-P) to produce N-acetylglucosamine-1-phosphate (GlcNAc-1-P), which is converted into UDP-GlcNAc by the transfer of uridine 5-monophosphate (from uridine 5-triphosphate), a reaction catalyzed by the N-terminal domain. The polypeptide is Bifunctional protein GlmU (Limosilactobacillus fermentum (strain NBRC 3956 / LMG 18251) (Lactobacillus fermentum)).